A 446-amino-acid polypeptide reads, in one-letter code: N-succinylarginine dihydrolase (446 aa).

Residues 19-28 (AGLSFGNEAS), asparagine 110, and 137-138 (HR) each bind substrate. Residue glutamate 174 is part of the active site. A substrate-binding site is contributed by arginine 213. Histidine 249 is a catalytic residue. 2 residues coordinate substrate: aspartate 251 and asparagine 364. The active-site Nucleophile is the cysteine 370.

The protein belongs to the succinylarginine dihydrolase family. In terms of assembly, homodimer.

It catalyses the reaction N(2)-succinyl-L-arginine + 2 H2O + 2 H(+) = N(2)-succinyl-L-ornithine + 2 NH4(+) + CO2. It participates in amino-acid degradation; L-arginine degradation via AST pathway; L-glutamate and succinate from L-arginine: step 2/5. Its function is as follows. Catalyzes the hydrolysis of N(2)-succinylarginine into N(2)-succinylornithine, ammonia and CO(2). The protein is N-succinylarginine dihydrolase of Serratia proteamaculans (strain 568).